The chain runs to 221 residues: Germin-like protein 8-2 (221 aa).

The signal sequence occupies residues 1-24 (MASSSFSFLLVAALLGLASWKAIA). An intrachain disulfide couples C34 to C49. Residues N54 and N79 are each glycosylated (N-linked (GlcNAc...) asparagine). Positions 64–215 (AMLDKPRDTN…AFQVDKKIID (152 aa)) constitute a Cupin type-1 domain. The Mn(2+) site is built by H112, H114, E119, and H160.

It belongs to the germin family. As to quaternary structure, oligomer (believed to be a pentamer but probably hexamer).

The protein resides in the secreted. It is found in the extracellular space. The protein localises to the apoplast. In terms of biological role, plays a role in broad-spectrum disease resistance. Probably has no oxalate oxidase activity even if the active site is conserved. The protein is Germin-like protein 8-2 (GER3) of Oryza sativa subsp. japonica (Rice).